Here is a 61-residue protein sequence, read N- to C-terminus: Photosystem II reaction center protein K (61 aa).

Residues M1–A24 constitute a propeptide that is removed on maturation. A helical membrane pass occupies residues I36–A56.

This sequence belongs to the PsbK family. In terms of assembly, PSII is composed of 1 copy each of membrane proteins PsbA, PsbB, PsbC, PsbD, PsbE, PsbF, PsbH, PsbI, PsbJ, PsbK, PsbL, PsbM, PsbT, PsbX, PsbY, PsbZ, Psb30/Ycf12, at least 3 peripheral proteins of the oxygen-evolving complex and a large number of cofactors. It forms dimeric complexes.

The protein resides in the plastid. It localises to the chloroplast thylakoid membrane. In terms of biological role, one of the components of the core complex of photosystem II (PSII). PSII is a light-driven water:plastoquinone oxidoreductase that uses light energy to abstract electrons from H(2)O, generating O(2) and a proton gradient subsequently used for ATP formation. It consists of a core antenna complex that captures photons, and an electron transfer chain that converts photonic excitation into a charge separation. In Gossypium barbadense (Sea Island cotton), this protein is Photosystem II reaction center protein K.